The chain runs to 43 residues: MSQKLSFFQQNTRNGSGASRTLVIKPPTIQPKPENSISKTFSK.

Polar residues-rich tracts occupy residues methionine 1 to serine 19 and proline 33 to lysine 43. The segment at methionine 1 to lysine 43 is disordered.

This is an uncharacterized protein from Dictyostelium discoideum (Social amoeba).